A 782-amino-acid chain; its full sequence is Cleavage and polyadenylation specificity factor subunit 2 (782 aa).

The span at 407–416 shows a compositional bias: basic and acidic residues; the sequence is KKLEQSKEAD. The segment at 407–449 is disordered; sequence KKLEQSKEADIDSSDESDIEEDIDQPSAHKTKHDLMMKGEGSR. Acidic residues predominate over residues 417–430; sequence IDSSDESDIEEDID. Phosphoserine occurs at positions 419, 420, and 423. Basic and acidic residues predominate over residues 439–449; that stretch reads HDLMMKGEGSR. S660 is subject to Phosphoserine.

It belongs to the metallo-beta-lactamase superfamily. RNA-metabolizing metallo-beta-lactamase-like family. CPSF2/YSH1 subfamily. As to quaternary structure, component of the cleavage and polyadenylation specificity factor (CPSF) complex, composed of CPSF1, CPSF2, CPSF3, CPSF4 and FIP1L1. Interacts with CPSF3, CSTF2 and SYMPK. Interacts with ZC3H3.

It localises to the nucleus. Functionally, component of the cleavage and polyadenylation specificity factor (CPSF) complex that play a key role in pre-mRNA 3'-end formation, recognizing the AAUAAA signal sequence and interacting with poly(A) polymerase and other factors to bring about cleavage and poly(A) addition. Involved in the histone 3' end pre-mRNA processing. This is Cleavage and polyadenylation specificity factor subunit 2 (CPSF2) from Homo sapiens (Human).